Here is a 196-residue protein sequence, read N- to C-terminus: Gastrula zinc finger protein XlCGF64.1 (196 aa).

7 C2H2-type zinc fingers span residues Tyr6–His28, Phe34–His56, Tyr62–His84, Phe90–His112, Tyr118–His140, Phe146–His168, and Leu174–His196.

This sequence belongs to the krueppel C2H2-type zinc-finger protein family.

It localises to the nucleus. Functionally, may be involved in transcriptional regulation. The polypeptide is Gastrula zinc finger protein XlCGF64.1 (Xenopus laevis (African clawed frog)).